The chain runs to 337 residues: Diacylglycerol O-acyltransferase 2-like protein 6 (337 aa).

Helical transmembrane passes span 22-42 and 102-122; these read IPVY…FLLF and YIIA…NFAT.

Belongs to the diacylglycerol acyltransferase family. Expressed in all tissues tested except pancreas.

Its subcellular location is the endoplasmic reticulum membrane. It catalyses the reaction 1,2-di-(9Z-octadecenoyl)-sn-glycerol + (9Z)-octadecenoyl-CoA = 1,2,3-tri-(9Z-octadecenoyl)-glycerol + CoA. The catalysed reaction is 1-O-(9Z-octadecenyl)-glycerol + (9Z)-octadecenoyl-CoA = 1-O-(9Z-octadecyl)-3-(9Z-octadecenoyl)-glycerol + CoA. It carries out the reaction 1-(9Z-octadecenoyl)-glycerol + (9Z)-octadecenoyl-CoA = 1,2-di-(9Z-octadecenoyl)-glycerol + CoA. Its function is as follows. Diglyceride acyltransferase that uses fatty acyl-CoA as substrate. Particularly active with oleate as a substrate. Has no wax synthase activity to produce wax esters. Able to use 1-monoalkylglycerol (1-MAkG) as an acyl acceptor for the synthesis of monoalkyl-monoacylglycerol (MAMAG). In Homo sapiens (Human), this protein is Diacylglycerol O-acyltransferase 2-like protein 6.